We begin with the raw amino-acid sequence, 476 residues long: ATP synthase subunit beta (476 aa).

154-161 (GGAGVGKT) is an ATP binding site.

It belongs to the ATPase alpha/beta chains family. F-type ATPases have 2 components, CF(1) - the catalytic core - and CF(0) - the membrane proton channel. CF(1) has five subunits: alpha(3), beta(3), gamma(1), delta(1), epsilon(1). CF(0) has four main subunits: a(1), b(1), b'(1) and c(9-12).

It localises to the cell inner membrane. It catalyses the reaction ATP + H2O + 4 H(+)(in) = ADP + phosphate + 5 H(+)(out). In terms of biological role, produces ATP from ADP in the presence of a proton gradient across the membrane. The catalytic sites are hosted primarily by the beta subunits. The chain is ATP synthase subunit beta from Rhodopseudomonas palustris (strain BisB5).